We begin with the raw amino-acid sequence, 466 residues long: Ribulose bisphosphate carboxylase (466 aa).

A substrate-binding site is contributed by Asn111. Lys166 acts as the Proton acceptor in catalysis. Lys168 provides a ligand contact to substrate. Positions 191, 193, and 194 each coordinate Mg(2+). At Lys191 the chain carries N6-carboxylysine. The active-site Proton acceptor is the His287. 3 residues coordinate substrate: Arg288, His321, and Ser368.

The protein belongs to the RuBisCO large chain family. Type II subfamily. In terms of assembly, homodimer. The cofactor is Mg(2+).

It catalyses the reaction 2 (2R)-3-phosphoglycerate + 2 H(+) = D-ribulose 1,5-bisphosphate + CO2 + H2O. The catalysed reaction is D-ribulose 1,5-bisphosphate + O2 = 2-phosphoglycolate + (2R)-3-phosphoglycerate + 2 H(+). RuBisCO catalyzes two reactions: the carboxylation of D-ribulose 1,5-bisphosphate, the primary event in carbon dioxide fixation, as well as the oxidative fragmentation of the pentose substrate. Both reactions occur simultaneously and in competition at the same active site. The polypeptide is Ribulose bisphosphate carboxylase (cbbM) (Rhodospirillum rubrum).